Consider the following 39-residue polypeptide: Cytochrome b6-f complex subunit 5 (39 aa).

Residues 5–25 (LLSGIVLGLVPVTILGLFVTA) traverse the membrane as a helical segment.

This sequence belongs to the PetG family. The 4 large subunits of the cytochrome b6-f complex are cytochrome b6, subunit IV (17 kDa polypeptide, PetD), cytochrome f and the Rieske protein, while the 4 small subunits are PetG, PetL, PetM and PetN. The complex functions as a dimer.

Its subcellular location is the plastid. It localises to the chloroplast thylakoid membrane. Functionally, component of the cytochrome b6-f complex, which mediates electron transfer between photosystem II (PSII) and photosystem I (PSI), cyclic electron flow around PSI, and state transitions. PetG is required for either the stability or assembly of the cytochrome b6-f complex. The sequence is that of Cytochrome b6-f complex subunit 5 from Pleurastrum terricola (Filamentous green alga).